A 151-amino-acid chain; its full sequence is Small heat shock protein HspH (151 aa).

Positions 28-138 (RAGEDNYPPY…KPRRIAINAA (111 aa)) constitute a sHSP domain.

Belongs to the small heat shock protein (HSP20) family.

The protein is Small heat shock protein HspH (hspH) of Bradyrhizobium diazoefficiens (strain JCM 10833 / BCRC 13528 / IAM 13628 / NBRC 14792 / USDA 110).